Here is a 1059-residue protein sequence, read N- to C-terminus: Carbamoyl phosphate synthase large chain (1059 aa).

Residues 1 to 401 form a carboxyphosphate synthetic domain region; sequence MPKRTDIKKI…SLLKACRSLE (401 aa). Residues arginine 129, arginine 169, glycine 175, glycine 176, arginine 208, isoleucine 210, glutamate 215, glycine 241, isoleucine 242, histidine 243, glutamine 284, and glutamate 298 each contribute to the ATP site. The ATP-grasp 1 domain occupies 133-327; that stretch reads KQLMEDLEQP…IAKLAAKIAV (195 aa). Mg(2+) contacts are provided by glutamine 284, glutamate 298, and asparagine 300. Mn(2+) contacts are provided by glutamine 284, glutamate 298, and asparagine 300. The oligomerization domain stretch occupies residues 402–546; sequence IGVYHNEMPE…YSTYEWENES (145 aa). Residues 547–929 are carbamoyl phosphate synthetic domain; the sequence is IKSEKESVIV…ALYKAFEASY (383 aa). Positions 671–861 constitute an ATP-grasp 2 domain; that stretch reads EQALKDLNIP…MAQIATKLIL (191 aa). ATP-binding residues include arginine 707, serine 746, leucine 748, glutamate 752, glycine 777, valine 778, histidine 779, serine 780, glutamine 820, and glutamate 832. Residues glutamine 820, glutamate 832, and asparagine 834 each coordinate Mg(2+). Positions 820, 832, and 834 each coordinate Mn(2+). In terms of domain architecture, MGS-like spans 930 to 1059; the sequence is FHLPAFGNVI…ESRGFITQAI (130 aa). Residues 930–1059 form an allosteric domain region; sequence FHLPAFGNVI…ESRGFITQAI (130 aa).

It belongs to the CarB family. Composed of two chains; the small (or glutamine) chain promotes the hydrolysis of glutamine to ammonia, which is used by the large (or ammonia) chain to synthesize carbamoyl phosphate. Tetramer of heterodimers (alpha,beta)4. The cofactor is Mg(2+). Mn(2+) is required as a cofactor.

It carries out the reaction hydrogencarbonate + L-glutamine + 2 ATP + H2O = carbamoyl phosphate + L-glutamate + 2 ADP + phosphate + 2 H(+). The catalysed reaction is hydrogencarbonate + NH4(+) + 2 ATP = carbamoyl phosphate + 2 ADP + phosphate + 2 H(+). It functions in the pathway amino-acid biosynthesis; L-arginine biosynthesis; carbamoyl phosphate from bicarbonate: step 1/1. Its pathway is pyrimidine metabolism; UMP biosynthesis via de novo pathway; (S)-dihydroorotate from bicarbonate: step 1/3. Its function is as follows. Large subunit of the glutamine-dependent carbamoyl phosphate synthetase (CPSase). CPSase catalyzes the formation of carbamoyl phosphate from the ammonia moiety of glutamine, carbonate, and phosphate donated by ATP, constituting the first step of 2 biosynthetic pathways, one leading to arginine and/or urea and the other to pyrimidine nucleotides. The large subunit (synthetase) binds the substrates ammonia (free or transferred from glutamine from the small subunit), hydrogencarbonate and ATP and carries out an ATP-coupled ligase reaction, activating hydrogencarbonate by forming carboxy phosphate which reacts with ammonia to form carbamoyl phosphate. The sequence is that of Carbamoyl phosphate synthase large chain from Streptococcus mutans serotype c (strain ATCC 700610 / UA159).